The chain runs to 304 residues: Acetylglutamate kinase (304 aa).

Substrate is bound by residues 77–78 (GG), Arg99, and Asn201.

This sequence belongs to the acetylglutamate kinase family. ArgB subfamily.

It is found in the cytoplasm. It carries out the reaction N-acetyl-L-glutamate + ATP = N-acetyl-L-glutamyl 5-phosphate + ADP. The protein operates within amino-acid biosynthesis; L-arginine biosynthesis; N(2)-acetyl-L-ornithine from L-glutamate: step 2/4. Its function is as follows. Catalyzes the ATP-dependent phosphorylation of N-acetyl-L-glutamate. In Methylibium petroleiphilum (strain ATCC BAA-1232 / LMG 22953 / PM1), this protein is Acetylglutamate kinase.